We begin with the raw amino-acid sequence, 130 residues long: Sirohydrochlorin cobaltochelatase (130 aa).

His-12 serves as the catalytic Proton acceptor. Co(2+) is bound at residue His-12. His-12 is a Ni(2+) binding site. Residues Glu-48 and 73–78 (LASGVH) contribute to the substrate site. His-78 provides a ligand contact to Co(2+). His-78 contributes to the Ni(2+) binding site.

Belongs to the CbiX family. CbiXS subfamily. Homotetramer; dimer of dimers.

The catalysed reaction is Co-sirohydrochlorin + 2 H(+) = sirohydrochlorin + Co(2+). The enzyme catalyses Ni-sirohydrochlorin + 2 H(+) = sirohydrochlorin + Ni(2+). Its pathway is cofactor biosynthesis; adenosylcobalamin biosynthesis; cob(II)yrinate a,c-diamide from sirohydrochlorin (anaerobic route): step 1/10. In terms of biological role, catalyzes the insertion of Co(2+) into sirohydrochlorin as part of the anaerobic pathway to cobalamin biosynthesis. Involved in the biosynthesis of the unique nickel-containing tetrapyrrole coenzyme F430, the prosthetic group of methyl-coenzyme M reductase (MCR), which plays a key role in methanogenesis and anaerobic methane oxidation. Catalyzes the insertion of Ni(2+) into sirohydrochlorin to yield Ni-sirohydrochlorin. This is Sirohydrochlorin cobaltochelatase from Methanosarcina barkeri (strain Fusaro / DSM 804).